A 352-amino-acid polypeptide reads, in one-letter code: Type II restriction enzyme HaeII (352 aa).

The catalysed reaction is Endonucleolytic cleavage of DNA to give specific double-stranded fragments with terminal 5'-phosphates.. Functionally, a P subtype restriction enzyme that recognizes the double-stranded sequence 5'-RGCGCY-3' and cleaves after C-5. This is Type II restriction enzyme HaeII (haeIIR) from Haemophilus aegyptius.